We begin with the raw amino-acid sequence, 349 residues long: Methylthioribose-1-phosphate isomerase (349 aa).

Substrate contacts are provided by residues 51–53 (RGA), R94, and Q199. The active-site Proton donor is D240. 250-251 (NK) contacts substrate.

This sequence belongs to the eIF-2B alpha/beta/delta subunits family. MtnA subfamily. In terms of assembly, homodimer.

It carries out the reaction 5-(methylsulfanyl)-alpha-D-ribose 1-phosphate = 5-(methylsulfanyl)-D-ribulose 1-phosphate. It functions in the pathway amino-acid biosynthesis; L-methionine biosynthesis via salvage pathway; L-methionine from S-methyl-5-thio-alpha-D-ribose 1-phosphate: step 1/6. Catalyzes the interconversion of methylthioribose-1-phosphate (MTR-1-P) into methylthioribulose-1-phosphate (MTRu-1-P). The sequence is that of Methylthioribose-1-phosphate isomerase from Bacillus cytotoxicus (strain DSM 22905 / CIP 110041 / 391-98 / NVH 391-98).